Consider the following 286-residue polypeptide: Urease accessory protein UreD 2 (286 aa).

Belongs to the UreD family. In terms of assembly, ureD, UreF and UreG form a complex that acts as a GTP-hydrolysis-dependent molecular chaperone, activating the urease apoprotein by helping to assemble the nickel containing metallocenter of UreC. The UreE protein probably delivers the nickel.

The protein resides in the cytoplasm. Its function is as follows. Required for maturation of urease via the functional incorporation of the urease nickel metallocenter. This Bradyrhizobium sp. (strain ORS 278) protein is Urease accessory protein UreD 2.